A 699-amino-acid chain; its full sequence is (E2-independent) E3 ubiquitin-conjugating enzyme FATS (699 aa).

The interval 48 to 116 is required for interaction with p53/TP53; it reads MISSIVISQM…LGIPAPSDER (69 aa). Disordered stretches follow at residues 107 to 134, 443 to 473, and 528 to 569; these read LGIP…GGPR, KPTR…ERRH, and KSED…PARS. 2 stretches are compositionally biased toward basic and acidic residues: residues 113–129 and 460–473; these read SDER…EERP and CLSR…ERRH. The tract at residues 116–224 is required for interaction with HDAC1; that stretch reads RGPEAELPPK…GLCERRKYWV (109 aa). The segment covering 534–545 has biased composition (pro residues); the sequence is TPEPSPAAPSPA. Residues 571–699 are ALMS motif; it reads TLQEALEVRK…LDQLLQRNAV (129 aa).

In terms of assembly, interacts with HDAC1; the interaction prevents binding of HDAC1 to CDKN1A/p21 and facilitates the acetylation and stabilization of CDKN1A/p21. Interacts with p53/TP53; the interaction inhibits binding of p53/TP53 and MDM2.

It localises to the cytoplasm. The protein localises to the cytoskeleton. Its subcellular location is the microtubule organizing center. The protein resides in the centrosome. Its function is as follows. Tumor suppressor that is required to sustain G2/M checkpoint after DNA damage. Acts as a p53/TP53 activator by inhibiting MDM2 binding to p53/TP53 and stimulating non-proteolytic polyubiquitination of p53/TP53. Exhibits ubiquitin ligase (E3) activity and assemble ubiquitin polymers through 'Lys-11'- (K11-), 'Lys-29'- (K29-) and 'Lys-63'- (K63)-linkages, independently of the ubiquitin-conjugating enzyme (E2). Promotes p53/TP53-dependent transcription of CDKN1A/p21, leading to robust checkpoint response. Mediates CDKN1A/p21 protein stability in a ubiquitin-independent manner. Interacts with HDAC1 and prevents binding of HDAC1 to CDKN1A/p21 and facilitates the acetylation and stabilization of CDKN1A/p21. May have a role in the assembly of primary cilia. The sequence is that of (E2-independent) E3 ubiquitin-conjugating enzyme FATS from Homo sapiens (Human).